The following is a 255-amino-acid chain: MVLEVKNLSFKYSQKLILDKLSFSVPKNSITSILAPNGSGKTTLLKCLLGLLKPLEETEIKACNKDILPLKPYEKAKLIAYIPQVEYYAFNFSVLDFVLMGKATHLNLFAMPKAKHIKEATSVLERLDLESLKDQGINDLSGGQRQMVLLARSLLQRTPLLLLDEPTSALDLKNQALFFDAIKDEMKKRELSVLVNIHDPNLVARHSTHVVMLKDKKLFLQASTPIAMTSHNLSALYDTPLEAIWHDNKLVVYAL.

The ABC transporter domain occupies 3-240 (LEVKNLSFKY…HNLSALYDTP (238 aa)). ATP is bound at residue 35–42 (APNGSGKT).

This sequence belongs to the ABC transporter superfamily.

Its subcellular location is the cell inner membrane. Functionally, part of a binding-protein-dependent transport system for an iron chelatin. Probably responsible for energy coupling to the transport system (Potential). This Helicobacter pylori (strain ATCC 700392 / 26695) (Campylobacter pylori) protein is Probable iron chelatin transport ATP-binding protein HP_0888.